A 326-amino-acid chain; its full sequence is Vascular endothelial growth factor D (326 aa).

Positions 1-21 are cleaved as a signal peptide; sequence MYGEWAAVNILMMSYVYLVQG. Positions 22-93 are excised as a propeptide; the sequence is FSIEHRAVKD…SRSTSHRSTR (72 aa). 3 disulfide bridges follow: Cys-116-Cys-158, Cys-147-Cys-194, and Cys-151-Cys-196. N-linked (GlcNAc...) asparagine glycans are attached at residues Asn-160 and Asn-190. Positions 211-326 are excised as a propeptide; it reads SIQIPEEDQC…CRSMVFSLSP (116 aa). The stretch at 227-242 is one 1; approximate repeat; sequence CPVDMLWDNTKCKCVL. Residues 227–317 are 4 X 16 AA repeats of C-X(10)-C-X-C-X(1,3)-C; it reads CPVDMLWDNT…KHKMFHPDTC (91 aa). 2 tandem repeats follow at residues 263 to 278 and 282 to 298. A glycan (N-linked (GlcNAc...) asparagine) is linked at Asn-292. The stretch at 306–317 is one 4; truncated repeat; that stretch reads CQKHKMFHPDTC.

The protein belongs to the PDGF/VEGF growth factor family. Homodimer; non-covalent and antiparallel. Undergoes a complex proteolytic maturation which generates a variety of processed secreted forms with increased activity toward VEGFR-3 and VEGFR-2. VEGF-D first form an antiparallel homodimer linked by disulfide bonds before secretion. The fully processed VEGF-D is composed mostly of two VEGF homology domains (VHDs) bound by non-covalent interactions. As to expression, highly expressed in the spleen, kidney, lung, tongue, ovary and mammary gland.

It is found in the secreted. Its function is as follows. Growth factor active in angiogenesis, lymphangiogenesis and endothelial cell growth, stimulating their proliferation and migration and also has effects on the permeability of blood vessels. May function in the formation of the venous and lymphatic vascular systems during embryogenesis, and also in the maintenance of differentiated lymphatic endothelium in adults. Binds and activates VEGFR-3 (Flt4) receptor. The sequence is that of Vascular endothelial growth factor D from Rattus norvegicus (Rat).